Here is a 418-residue protein sequence, read N- to C-terminus: Tyrosine--tRNA ligase (418 aa).

Residue Y34 participates in L-tyrosine binding. A 'HIGH' region motif is present at residues 39–48; the sequence is PTADSLHLGH. Positions 169 and 173 each coordinate L-tyrosine. Residues 229-233 carry the 'KMSKS' region motif; sequence KFGKS. Residue K232 coordinates ATP. In terms of domain architecture, S4 RNA-binding spans 352–418; that stretch reads NNIVELLVSS…GKKKYFVLTY (67 aa).

It belongs to the class-I aminoacyl-tRNA synthetase family. TyrS type 1 subfamily. Homodimer.

Its subcellular location is the cytoplasm. It catalyses the reaction tRNA(Tyr) + L-tyrosine + ATP = L-tyrosyl-tRNA(Tyr) + AMP + diphosphate + H(+). Catalyzes the attachment of tyrosine to tRNA(Tyr) in a two-step reaction: tyrosine is first activated by ATP to form Tyr-AMP and then transferred to the acceptor end of tRNA(Tyr). This is Tyrosine--tRNA ligase from Streptococcus pneumoniae (strain 70585).